An 88-amino-acid polypeptide reads, in one-letter code: Apolipoprotein C-I (88 aa).

A signal peptide spans 1–26 (MRLFLSLPVWVAVLAMVLEGPAPAQA).

It belongs to the apolipoprotein C1 family.

The protein resides in the secreted. Inhibitor of lipoprotein binding to the low density lipoprotein (LDL) receptor, LDL receptor-related protein, and very low density lipoprotein (VLDL) receptor. Associates with high density lipoproteins (HDL) and the triacylglycerol-rich lipoproteins in the plasma and makes up about 10% of the protein of the VLDL and 2% of that of HDL. Appears to interfere directly with fatty acid uptake and is also the major plasma inhibitor of cholesteryl ester transfer protein (CETP). Binds free fatty acids and reduces their intracellular esterification. Modulates the interaction of APOE with beta-migrating VLDL and inhibits binding of beta-VLDL to the LDL receptor-related protein. The chain is Apolipoprotein C-I (APOC1) from Ursus maritimus (Polar bear).